Here is a 453-residue protein sequence, read N- to C-terminus: tRNA modification GTPase MnmE (453 aa).

Residues Arg22, Glu79, and Lys119 each contribute to the (6S)-5-formyl-5,6,7,8-tetrahydrofolate site. Residues 215–376 (GMKVVIAGRP…LQQHLKSLMG (162 aa)) form the TrmE-type G domain. Residue Asn225 participates in K(+) binding. GTP-binding positions include 225 to 230 (NAGKSS), 244 to 250 (TEIAGTT), 269 to 272 (DTAG), and 334 to 337 (NKAD). Residue Ser229 coordinates Mg(2+). Residues Thr244, Ile246, and Thr249 each contribute to the K(+) site. Thr250 provides a ligand contact to Mg(2+). Lys453 contacts (6S)-5-formyl-5,6,7,8-tetrahydrofolate.

It belongs to the TRAFAC class TrmE-Era-EngA-EngB-Septin-like GTPase superfamily. TrmE GTPase family. In terms of assembly, homodimer. Heterotetramer of two MnmE and two MnmG subunits. It depends on K(+) as a cofactor.

The protein resides in the cytoplasm. Functionally, exhibits a very high intrinsic GTPase hydrolysis rate. Involved in the addition of a carboxymethylaminomethyl (cmnm) group at the wobble position (U34) of certain tRNAs, forming tRNA-cmnm(5)s(2)U34. This chain is tRNA modification GTPase MnmE, found in Shewanella woodyi (strain ATCC 51908 / MS32).